Here is a 32-residue protein sequence, read N- to C-terminus: Delta-conotoxin-like CnVID (32 aa).

Intrachain disulfides connect Cys-3-Cys-18, Cys-10-Cys-22, and Cys-17-Cys-27. 2 positions are modified to 4-hydroxyproline: Pro-6 and Pro-14.

The protein belongs to the conotoxin O1 superfamily. As to expression, expressed by the venom duct.

It is found in the secreted. Delta-conotoxins bind to site 6 of voltage-gated sodium channels (Nav) and inhibit the inactivation process. This toxin acts on Nav1.2/SCN2A, Nav1.3/SCN3A and Nav1.6/SCN8A (EC(50)=1.7 uM). The protein is Delta-conotoxin-like CnVID of Conus consors (Singed cone).